A 277-amino-acid polypeptide reads, in one-letter code: Hydroxypyruvate/pyruvate aldolase (277 aa).

Catalysis depends on His-54, which acts as the Proton acceptor. A divalent metal cation-binding residues include Glu-158 and Asp-184.

The protein belongs to the HpcH/HpaI aldolase family. A divalent metal cation is required as a cofactor.

The enzyme catalyses D-glyceraldehyde + 3-hydroxypyruvate = (3R,4S,5R)-3,4,5,6-tetrahydroxy-2-oxohexanoate. It carries out the reaction D-glyceraldehyde + 3-hydroxypyruvate = 2-dehydro-D-gluconate. The catalysed reaction is D-glyceraldehyde + 3-hydroxypyruvate = 2-dehydro-D-galactonate. It catalyses the reaction D-glyceraldehyde + pyruvate = 2-dehydro-3-deoxy-L-galactonate. In terms of biological role, aldolase which can catalyze in vitro the aldolisation reaction between hydroxypyruvate (HPA) or pyruvate (PA) and D-glyceraldehyde (D-GA). The condensation of hydroxypyruvate and D-glyceraldehyde produces (3R,4S,5R)-3,4,5,6-tetrahydroxy-2-oxohexanoate as the major product, 2-dehydro-D-gluconate and 2-dehydro-D-galactonate. The condensation of pyruvate and D-glyceraldehyde produces 2-dehydro-3-deoxy-L-galactonate as the major product. This Deinococcus radiodurans (strain ATCC 13939 / DSM 20539 / JCM 16871 / CCUG 27074 / LMG 4051 / NBRC 15346 / NCIMB 9279 / VKM B-1422 / R1) protein is Hydroxypyruvate/pyruvate aldolase.